The sequence spans 999 residues: Embryonic polarity protein dorsal (999 aa).

Positions Met1–Arg44 are disordered. The 296-residue stretch at Pro47 to Lys342 folds into the RHD domain. A Phosphoserine; by PKA modification is found at Ser312. Disordered stretches follow at residues Phe389–Thr424 and Gln670–Gly851. The span at Glu402–Thr424 shows a compositional bias: low complexity. Positions Asn668–Pro677 match the Nuclear export signal motif. The span at Pro677–Pro686 shows a compositional bias: pro residues. The span at Lys710–Ser719 shows a compositional bias: basic and acidic residues. A compositionally biased stretch (polar residues) spans Ile720–Ser734. Residues Lys756–Asp773 carry the Nuclear localization signal motif. 2 stretches are compositionally biased toward low complexity: residues Ser819 to Val829 and Ser836 to Gly851.

In terms of assembly, interacts with tamo via the nuclear localization signal. Interacts with emb, a component of the nuclear export complex. As to expression, in unchallenged larvae, expression of both isoforms is seen in fat body and gut (isoform A is more abundant). After immune challenge levels of both isoforms are enhanced.

The protein resides in the cytoplasm. It localises to the nucleus. Embryonic developmental transcription factor. The lateral or ventral identity of a cell depends upon the concentration of this protein in its nucleus during the blastoderm stage. Acts as a morphogenetic transcription factor that specifically binds to the kappa-B-related consensus sequence 5'-GRGAAAANCC-3', located in the enhancer region of zygotic genes such as Zen, Twist, Snail and Decapentaplegic, promoting their expression. Part of a signaling pathway involving NF-kappa-B and Toll-related receptors, that functions in the apoptosis of unfit cells during cell competition. Mediates an immune response in larvae. May be part of a NF-kappa-B and Tollo signaling cascade that regulates development of the peripheral nervous system. The polypeptide is Embryonic polarity protein dorsal (dl) (Drosophila melanogaster (Fruit fly)).